A 462-amino-acid chain; its full sequence is Glycine--tRNA ligase (462 aa).

Substrate contacts are provided by Arg-101 and Glu-164. Residues 196 to 198, 206 to 211, 283 to 284, and 327 to 330 each bind ATP; these read RNE, FRTREF, EL, and GVDR. 211-215 provides a ligand contact to substrate; the sequence is FEQME. 323–327 is a binding site for substrate; it reads EPSAG.

Belongs to the class-II aminoacyl-tRNA synthetase family. Homodimer.

The protein localises to the cytoplasm. It carries out the reaction tRNA(Gly) + glycine + ATP = glycyl-tRNA(Gly) + AMP + diphosphate. In terms of biological role, catalyzes the attachment of glycine to tRNA(Gly). This is Glycine--tRNA ligase from Thermobifida fusca (strain YX).